We begin with the raw amino-acid sequence, 251 residues long: 2,3-bisphosphoglycerate-dependent phosphoglycerate mutase (251 aa).

Residues 11–18 (RHGNSDWN), 24–25 (TG), Arg-63, 90–93 (ERHY), Lys-101, 117–118 (RR), and 185–186 (GN) contribute to the substrate site. The active-site Tele-phosphohistidine intermediate is His-12. The active-site Proton donor/acceptor is Glu-90. The segment at 117 to 142 (RRSFDVPPPPIDDDDEYSQSRDPRYA) is disordered.

This sequence belongs to the phosphoglycerate mutase family. BPG-dependent PGAM subfamily.

It carries out the reaction (2R)-2-phosphoglycerate = (2R)-3-phosphoglycerate. Its pathway is carbohydrate degradation; glycolysis; pyruvate from D-glyceraldehyde 3-phosphate: step 3/5. Its function is as follows. Catalyzes the interconversion of 2-phosphoglycerate and 3-phosphoglycerate. This is 2,3-bisphosphoglycerate-dependent phosphoglycerate mutase from Clavibacter michiganensis subsp. michiganensis (strain NCPPB 382).